The sequence spans 144 residues: Transcription antitermination protein NusB (144 aa).

The protein belongs to the NusB family.

In terms of biological role, involved in transcription antitermination. Required for transcription of ribosomal RNA (rRNA) genes. Binds specifically to the boxA antiterminator sequence of the ribosomal RNA (rrn) operons. This is Transcription antitermination protein NusB from Paraburkholderia xenovorans (strain LB400).